The sequence spans 295 residues: Calcium-regulated actin-bundling protein (295 aa).

As to quaternary structure, monomer.

Functionally, may contribute to the structure and reorganization of filopodia and pseudopodia accompanying cell movements. The protein is Calcium-regulated actin-bundling protein (abpB) of Dictyostelium discoideum (Social amoeba).